The sequence spans 81 residues: ATP synthase subunit c, chloroplastic (81 aa).

The next 2 membrane-spanning stretches (helical) occupy residues 3 to 23 and 57 to 77; these read PLVFAASVIAAGLAVGLASIG and LAFMEALTIYGLVVALALLFA.

The protein belongs to the ATPase C chain family. As to quaternary structure, F-type ATPases have 2 components, F(1) - the catalytic core - and F(0) - the membrane proton channel. F(1) has five subunits: alpha(3), beta(3), gamma(1), delta(1), epsilon(1). F(0) has four main subunits: a(1), b(1), b'(1) and c(10-14). The alpha and beta chains form an alternating ring which encloses part of the gamma chain. F(1) is attached to F(0) by a central stalk formed by the gamma and epsilon chains, while a peripheral stalk is formed by the delta, b and b' chains.

The protein localises to the plastid. It localises to the chloroplast thylakoid membrane. In terms of biological role, f(1)F(0) ATP synthase produces ATP from ADP in the presence of a proton or sodium gradient. F-type ATPases consist of two structural domains, F(1) containing the extramembraneous catalytic core and F(0) containing the membrane proton channel, linked together by a central stalk and a peripheral stalk. During catalysis, ATP synthesis in the catalytic domain of F(1) is coupled via a rotary mechanism of the central stalk subunits to proton translocation. Functionally, key component of the F(0) channel; it plays a direct role in translocation across the membrane. A homomeric c-ring of between 10-14 subunits forms the central stalk rotor element with the F(1) delta and epsilon subunits. This chain is ATP synthase subunit c, chloroplastic, found in Atropa belladonna (Belladonna).